Reading from the N-terminus, the 543-residue chain is Ipecac alkaloid beta-glucosidase 2 (543 aa).

Residues Gln36, His140, 185–186 (NE), Tyr350, Glu422, Trp471, and Phe487 contribute to the a beta-D-glucoside site. Glu186 functions as the Proton donor in the catalytic mechanism. Glu422 (nucleophile) is an active-site residue.

It belongs to the glycosyl hydrolase 1 family.

It localises to the cytoplasm. The protein resides in the cytosol. The catalysed reaction is deacetylipecoside + H2O = deacetylipecoside aglycone + D-glucose. The enzyme catalyses deacetylisoipecoside + H2O = deacetylisoipecoside aglycone + D-glucose. It functions in the pathway alkaloid biosynthesis. In terms of biological role, beta-glucosidase catalyzing deglucosylation on N-deacetylisoipecoside and N-deacetylipecoside. The chain is Ipecac alkaloid beta-glucosidase 2 from Carapichea ipecacuanha (Ipecac).